Reading from the N-terminus, the 688-residue chain is Glycine--tRNA ligase beta subunit (688 aa).

This sequence belongs to the class-II aminoacyl-tRNA synthetase family. In terms of assembly, tetramer of two alpha and two beta subunits.

The protein resides in the cytoplasm. The catalysed reaction is tRNA(Gly) + glycine + ATP = glycyl-tRNA(Gly) + AMP + diphosphate. The protein is Glycine--tRNA ligase beta subunit of Desulforudis audaxviator (strain MP104C).